The chain runs to 229 residues: 7-cyano-7-deazaguanine synthase (229 aa).

An ATP-binding site is contributed by 8 to 18 (FSGGQDSTTCL). Residues C186, C195, C198, and C201 each contribute to the Zn(2+) site.

Belongs to the QueC family. The cofactor is Zn(2+).

It catalyses the reaction 7-carboxy-7-deazaguanine + NH4(+) + ATP = 7-cyano-7-deazaguanine + ADP + phosphate + H2O + H(+). Its pathway is purine metabolism; 7-cyano-7-deazaguanine biosynthesis. Functionally, catalyzes the ATP-dependent conversion of 7-carboxy-7-deazaguanine (CDG) to 7-cyano-7-deazaguanine (preQ(0)). This Edwardsiella ictaluri (strain 93-146) protein is 7-cyano-7-deazaguanine synthase.